Here is a 249-residue protein sequence, read N- to C-terminus: Hydroxyacylglutathione hydrolase (249 aa).

The Zn(2+) site is built by His-53, His-55, Asp-57, His-58, His-110, Asp-127, and His-165.

The protein belongs to the metallo-beta-lactamase superfamily. Glyoxalase II family. As to quaternary structure, monomer. Requires Zn(2+) as cofactor.

The catalysed reaction is an S-(2-hydroxyacyl)glutathione + H2O = a 2-hydroxy carboxylate + glutathione + H(+). It functions in the pathway secondary metabolite metabolism; methylglyoxal degradation; (R)-lactate from methylglyoxal: step 2/2. Its function is as follows. Thiolesterase that catalyzes the hydrolysis of S-D-lactoyl-glutathione to form glutathione and D-lactic acid. The chain is Hydroxyacylglutathione hydrolase from Buchnera aphidicola subsp. Baizongia pistaciae (strain Bp).